The sequence spans 129 residues: Small ribosomal subunit protein uS11 (129 aa).

This sequence belongs to the universal ribosomal protein uS11 family. As to quaternary structure, part of the 30S ribosomal subunit. Interacts with proteins S7 and S18. Binds to IF-3.

Located on the platform of the 30S subunit, it bridges several disparate RNA helices of the 16S rRNA. Forms part of the Shine-Dalgarno cleft in the 70S ribosome. The chain is Small ribosomal subunit protein uS11 from Desulfovibrio desulfuricans (strain ATCC 27774 / DSM 6949 / MB).